The primary structure comprises 252 residues: Triosephosphate isomerase (252 aa).

Substrate is bound at residue 10-12 (NWK). The active-site Electrophile is the H96. E168 acts as the Proton acceptor in catalysis. Residues G174, S214, and 235-236 (GG) contribute to the substrate site.

This sequence belongs to the triosephosphate isomerase family. In terms of assembly, homodimer.

The protein resides in the cytoplasm. It carries out the reaction D-glyceraldehyde 3-phosphate = dihydroxyacetone phosphate. Its pathway is carbohydrate biosynthesis; gluconeogenesis. It functions in the pathway carbohydrate degradation; glycolysis; D-glyceraldehyde 3-phosphate from glycerone phosphate: step 1/1. Functionally, involved in the gluconeogenesis. Catalyzes stereospecifically the conversion of dihydroxyacetone phosphate (DHAP) to D-glyceraldehyde-3-phosphate (G3P). This is Triosephosphate isomerase from Streptococcus pyogenes serotype M18 (strain MGAS8232).